The chain runs to 300 residues: Ribonuclease HIII (300 aa).

An RNase H type-2 domain is found at 83–300; that stretch reads IPIIGSDEVG…THKAQALLTK (218 aa). Positions 89, 90, and 194 each coordinate a divalent metal cation.

The protein belongs to the RNase HII family. RnhC subfamily. Requires Mn(2+) as cofactor. The cofactor is Mg(2+).

Its subcellular location is the cytoplasm. The enzyme catalyses Endonucleolytic cleavage to 5'-phosphomonoester.. In terms of biological role, endonuclease that specifically degrades the RNA of RNA-DNA hybrids. In Streptococcus pyogenes serotype M12 (strain MGAS2096), this protein is Ribonuclease HIII.